We begin with the raw amino-acid sequence, 173 residues long: NADH-ubiquinone oxidoreductase chain 6 (173 aa).

Helical transmembrane passes span 1 to 21 (MTYF…AVAS), 27 to 47 (YGVV…LSLG), 48 to 68 (VSFV…VVFV), 87 to 107 (VVGY…VGGL), and 139 to 159 (CGVG…FVVL).

This sequence belongs to the complex I subunit 6 family.

It localises to the mitochondrion membrane. It carries out the reaction a ubiquinone + NADH + 5 H(+)(in) = a ubiquinol + NAD(+) + 4 H(+)(out). Functionally, core subunit of the mitochondrial membrane respiratory chain NADH dehydrogenase (Complex I) that is believed to belong to the minimal assembly required for catalysis. Complex I functions in the transfer of electrons from NADH to the respiratory chain. The immediate electron acceptor for the enzyme is believed to be ubiquinone. This Larus canus (Common gull) protein is NADH-ubiquinone oxidoreductase chain 6 (MT-ND6).